The sequence spans 689 residues: Protein asunder (689 aa).

Positions 521 to 550 form a coiled coil; it reads NGARLKLSKAKDQYRLLYRELEQLIQLNAT. Disordered stretches follow at residues 578–619 and 662–689; these read GASL…SKRR and PDFGNKDKDTVASGASITPNVKEESVRS. The segment covering 599–614 has biased composition (low complexity); it reads SSGSASGSSNSNSLLK. The Nuclear localization signal (NLS) signature appears at 613–619; the sequence is LKASKRR.

Belongs to the Integrator subunit 13 family. Belongs to the multiprotein complex Integrator, at least composed of IntS1, IntS2, IntS3, IntS4, omd/IntS5, IntS6, defl/IntS7, IntS8, IntS9, IntS10, IntS11, IntS12, asun/IntS13, IntS14 and IntS15. The core complex associates with protein phosphatase 2A subunits mts/PP2A and Pp2A-29B, to form the Integrator-PP2A (INTAC) complex. Post-translationally, phosphorylated.

It is found in the nucleus. Its subcellular location is the cytoplasm. It localises to the perinuclear region. Functionally, component of the integrator complex, a multiprotein complex that terminates RNA polymerase II (Pol II) transcription in the promoter-proximal region of genes. The integrator complex provides a quality checkpoint during transcription elongation by driving premature transcription termination of transcripts that are unfavorably configured for transcriptional elongation: the complex terminates transcription by (1) catalyzing dephosphorylation of the C-terminal domain (CTD) of Pol II subunit Polr2A/Rbp1 and Spt5, and (2) degrading the exiting nascent RNA transcript via endonuclease activity. The integrator complex is also involved in the 3'-end processing of the U7 snRNA, and also the spliceosomal snRNAs U1, U2, U4 and U5. In Drosophila yakuba (Fruit fly), this protein is Protein asunder (asun).